The sequence spans 180 residues: Amnesiac neuropeptides (180 aa).

Positions 1 to 32 (MRSFCCCFYPAAVALHCVLLFYTFFLLFRASA) are cleaved as a signal peptide. Propeptides lie at residues 33-35 (LRR) and 152-180 (GRRS…GEMR). The tract at residues 155–180 (SVPRGQPKFSRENPRALSPSLLGEMR) is disordered.

Enriched expression in the embryonic and larval nervous systems. Strongly expressed in two large neurons that project over all the lobes of the mushroom bodies.

The protein localises to the secreted. Required for associative learning and memory in adults. Expression pattern suggests a modulatory role in memory formation. Controls neurotransmitter-mediated signaling pathways associated with the structure of the larval peripheral nerve. The chain is Amnesiac neuropeptides (amn) from Drosophila melanogaster (Fruit fly).